Reading from the N-terminus, the 431-residue chain is Glutamate-1-semialdehyde 2,1-aminomutase (431 aa).

Position 269 is an N6-(pyridoxal phosphate)lysine (Lys269).

Belongs to the class-III pyridoxal-phosphate-dependent aminotransferase family. HemL subfamily. Homodimer. The cofactor is pyridoxal 5'-phosphate.

Its subcellular location is the cytoplasm. The enzyme catalyses (S)-4-amino-5-oxopentanoate = 5-aminolevulinate. The protein operates within porphyrin-containing compound metabolism; protoporphyrin-IX biosynthesis; 5-aminolevulinate from L-glutamyl-tRNA(Glu): step 2/2. The protein is Glutamate-1-semialdehyde 2,1-aminomutase of Francisella tularensis subsp. mediasiatica (strain FSC147).